The primary structure comprises 1326 residues: Putative late blight resistance protein homolog R1B-19 (1326 aa).

Coiled-coil stretches lie at residues 421–444 (RYSDSLAFLKNQLQVIQTEFESLQ) and 536–558 (PRMKEEIVGFEDIIENLRKKLLN). 570 to 577 (GMPGLGKT) contributes to the ATP binding site. Residues 611 to 864 (LLSLLCDTIG…KVKTCRLHDV (254 aa)) enclose the NB-ARC domain. A coiled-coil region spans residues 749-770 (SEMEKEVECWEQVANNLGTRIH). LRR repeat units follow at residues 953-978 (FKFLKVLDLEHQVFIDFIPTELVYLK), 980-996 (FSAHIKQNSIPSSIYNL), 1027-1050 (LRHLYIPDFSTENEEALLENSAKL), 1053-1070 (LETLSTPYFSRYHVLNFP), 1071-1094 (IRLEILKLYRSKAFKTIPFCISAP), 1098-1118 (YLKLSGFYLDSQYLSETADHL), 1119-1146 (KNLEVLKLYYVEFGDHREWKVSNGMFPQ), 1167-1191 (FPNLEQLYIKVENCNELVVKSAMNI), and 1208-1230 (LIEKKTLKLNLSHDEDIPKAFKR). In terms of domain architecture, HMA spans 1209-1278 (IEKKTLKLNL…AWHARVVVPT (70 aa)).

Belongs to the disease resistance NB-LRR family.

The protein localises to the cytoplasm. It localises to the membrane. Its function is as follows. Confers resistance to late blight (Phytophthora infestans) races carrying the avirulence gene Avr1. Resistance proteins guard the plant against pathogens that contain an appropriate avirulence protein via an indirect interaction with this avirulence protein. That triggers a defense system including the hypersensitive response, which restricts the pathogen growth. This chain is Putative late blight resistance protein homolog R1B-19 (R1B-19), found in Solanum demissum (Wild potato).